The chain runs to 535 residues: CTP synthase (535 aa).

Positions 1–267 (MTKFIFVTGG…DDIVIKRLDL (267 aa)) are amidoligase domain. Ser13 is a CTP binding site. Position 13 (Ser13) interacts with UTP. 14-19 (SLGKGI) serves as a coordination point for ATP. Residue Tyr54 coordinates L-glutamine. Asp71 serves as a coordination point for ATP. Residues Asp71 and Glu141 each coordinate Mg(2+). CTP is bound by residues 148–150 (DIE), 188–193 (KTKPTQ), and Lys224. UTP contacts are provided by residues 188–193 (KTKPTQ) and Lys224. 240 to 242 (RDA) is a binding site for ATP. A Glutamine amidotransferase type-1 domain is found at 293–535 (TIGLVGKYVS…VEAAYKHQNK (243 aa)). Gly355 provides a ligand contact to L-glutamine. Catalysis depends on Cys382, which acts as the Nucleophile; for glutamine hydrolysis. Residues 383–386 (LGMQ), Glu406, and Arg463 each bind L-glutamine. Catalysis depends on residues His508 and Glu510.

It belongs to the CTP synthase family. As to quaternary structure, homotetramer.

It carries out the reaction UTP + L-glutamine + ATP + H2O = CTP + L-glutamate + ADP + phosphate + 2 H(+). The catalysed reaction is L-glutamine + H2O = L-glutamate + NH4(+). The enzyme catalyses UTP + NH4(+) + ATP = CTP + ADP + phosphate + 2 H(+). It participates in pyrimidine metabolism; CTP biosynthesis via de novo pathway; CTP from UDP: step 2/2. Its activity is regulated as follows. Allosterically activated by GTP, when glutamine is the substrate; GTP has no effect on the reaction when ammonia is the substrate. The allosteric effector GTP functions by stabilizing the protein conformation that binds the tetrahedral intermediate(s) formed during glutamine hydrolysis. Inhibited by the product CTP, via allosteric rather than competitive inhibition. Its function is as follows. Catalyzes the ATP-dependent amination of UTP to CTP with either L-glutamine or ammonia as the source of nitrogen. Regulates intracellular CTP levels through interactions with the four ribonucleotide triphosphates. This Staphylococcus haemolyticus (strain JCSC1435) protein is CTP synthase.